The chain runs to 1478 residues: Fanconi anemia group D2 protein homolog (1478 aa).

Residues 33–53 (NISVESSSGGSEENIPASQEH) form a disordered region. Low complexity predominate over residues 35–45 (SVESSSGGSEE). Residue K595 forms a Glycyl lysine isopeptide (Lys-Gly) (interchain with G-Cter in ubiquitin) linkage. Disordered stretches follow at residues 896 to 918 (NQNQ…PEPD) and 1420 to 1478 (TPRS…SKCF). Acidic residues predominate over residues 1429–1442 (ENSDDELPADDTSV). The segment covering 1468–1478 (RSKSSSRSKCF) has biased composition (basic residues).

This sequence belongs to the Fanconi anemia protein FANCD2 family. In terms of assembly, homodimer; cannot be ubiquitinated and does not bind DNA. Part of a Fanci-Fancd2 heterodimeric complex that binds and scans dsDNA for DNA damage. Interacts with Fancl (via C-terminus). Monoubiquitinated by Fancl in response to ionising radiation.

The protein localises to the nucleus. Required for maintenance of chromosomal stability. Together with Fancl, and probably Fanci, involved in DNA repair of damage caused by agents that induce interstrand cross-links but not agents that cause double strand breaks. Required for S phase checkpoint activation in response to ionizing radiation induced DNA damage. This chain is Fanconi anemia group D2 protein homolog, found in Drosophila melanogaster (Fruit fly).